A 620-amino-acid polypeptide reads, in one-letter code: 1-deoxy-D-xylulose-5-phosphate synthase (620 aa).

Residues H80 and 121-123 (GHS) contribute to the thiamine diphosphate site. D152 contributes to the Mg(2+) binding site. Residues 153 to 154 (GA), N181, Y288, and E370 contribute to the thiamine diphosphate site. N181 provides a ligand contact to Mg(2+).

The protein belongs to the transketolase family. DXPS subfamily. Homodimer. Requires Mg(2+) as cofactor. The cofactor is thiamine diphosphate.

It carries out the reaction D-glyceraldehyde 3-phosphate + pyruvate + H(+) = 1-deoxy-D-xylulose 5-phosphate + CO2. Its pathway is metabolic intermediate biosynthesis; 1-deoxy-D-xylulose 5-phosphate biosynthesis; 1-deoxy-D-xylulose 5-phosphate from D-glyceraldehyde 3-phosphate and pyruvate: step 1/1. Catalyzes the acyloin condensation reaction between C atoms 2 and 3 of pyruvate and glyceraldehyde 3-phosphate to yield 1-deoxy-D-xylulose-5-phosphate (DXP). The protein is 1-deoxy-D-xylulose-5-phosphate synthase of Shigella dysenteriae serotype 1 (strain Sd197).